A 122-amino-acid chain; its full sequence is Early nodulin-10 (122 aa).

The signal sequence occupies residues 1-36; the sequence is MTCTLKSPPKMASFFLSSLVLMFIAALILLPQGLAA. Repeat copies occupy residues 45–49, 51–55, 58–62, 68–72, 77–81, 82–86, 88–92, 99–103, 106–110, and 113–117. The tract at residues 45 to 117 is 10 X 5 AA approximate repeats of P-P-X-X-X; that stretch reads PPDSELPPYR…FYKQAPPSQK (73 aa). The tract at residues 90–122 is disordered; the sequence is TYKPSKKRLPPPFQKLPPFYKQAPPSQKLPRVN.

In terms of tissue distribution, root nodules. In early nodules, expressed only in the interior of the developing nodule with no expression in other nodule tissues, including meristem. In slightly older nodules, expressed in almost all cells of the central zone. In more mature nodules, expression is restricted to the invasion zone.

In Medicago sativa (Alfalfa), this protein is Early nodulin-10 (ENOD10).